The sequence spans 616 residues: 2-[(L-alanin-3-ylcarbamoyl)methyl]-3-(2-aminoethylcarbamoyl)-2-hydroxypropanoate synthase (616 aa).

Belongs to the IucA/IucC family. In terms of assembly, forms a mixture of monomer and dimer in solution.

The enzyme catalyses 2-[(2-aminoethylcarbamoyl)methyl]-2-hydroxybutanedioate + (S)-2,3-diaminopropanoate + ATP = 2-[(L-alanin-3-ylcarbamoyl)methyl]-3-(2-aminoethylcarbamoyl)-2-hydroxypropanoate + AMP + diphosphate. It functions in the pathway siderophore biosynthesis. Catalyzes the condensation of L-2,3-diaminopropionic acid (L-Dap) and citryl-diaminoethane to form L-2,3-diaminopropionyl-citryl-diaminoethane, the third step in staphyloferrin B biosynthesis. This chain is 2-[(L-alanin-3-ylcarbamoyl)methyl]-3-(2-aminoethylcarbamoyl)-2-hydroxypropanoate synthase, found in Staphylococcus aureus (strain NCTC 8325 / PS 47).